A 1807-amino-acid polypeptide reads, in one-letter code: Phospholipase D (1807 aa).

The tract at residues Met-1–Pro-28 is disordered. 3 consecutive transmembrane segments (helical) span residues Ile-257–Ser-277, Ala-305–Tyr-325, and Val-587–Ala-607. The interval Thr-697–Ser-734 is disordered. PLD phosphodiesterase domains follow at residues Gly-853 to Arg-880 and Glu-1249 to Ser-1276. Catalysis depends on residues His-858, Lys-860, Asp-865, His-1254, Lys-1256, and Asp-1261. 3 stretches are compositionally biased toward polar residues: residues Phe-1531 to Asp-1547, Tyr-1568 to Ser-1578, and Tyr-1597 to Ala-1614. Residues Phe-1531–Ser-1621 are disordered.

The protein belongs to the phospholipase D family. TM-PLD subfamily.

Its subcellular location is the membrane. The catalysed reaction is a 1,2-diacyl-sn-glycero-3-phosphocholine + H2O = a 1,2-diacyl-sn-glycero-3-phosphate + choline + H(+). Functionally, hydrolyzes glycerol-phospholipids at the terminal phosphodiesteric bond. The chain is Phospholipase D from Phytophthora infestans (Potato late blight agent).